The chain runs to 58 residues: Small ribosomal subunit protein bS21 (58 aa).

Residues 25-58 form a disordered region; sequence SKSGTLQEYRKREHYEKPSVKRKKKSEAARKRKF. Residues 32–43 show a composition bias toward basic and acidic residues; it reads EYRKREHYEKPS. Positions 44 to 58 are enriched in basic residues; that stretch reads VKRKKKSEAARKRKF.

This sequence belongs to the bacterial ribosomal protein bS21 family.

This Oceanobacillus iheyensis (strain DSM 14371 / CIP 107618 / JCM 11309 / KCTC 3954 / HTE831) protein is Small ribosomal subunit protein bS21.